The sequence spans 130 residues: Small ribosomal subunit protein uS9 (130 aa).

The protein belongs to the universal ribosomal protein uS9 family.

The protein is Small ribosomal subunit protein uS9 of Pseudomonas putida (strain ATCC 700007 / DSM 6899 / JCM 31910 / BCRC 17059 / LMG 24140 / F1).